Here is a 187-residue protein sequence, read N- to C-terminus: UPF0301 protein VP2612 (187 aa).

It belongs to the UPF0301 (AlgH) family.

This chain is UPF0301 protein VP2612, found in Vibrio parahaemolyticus serotype O3:K6 (strain RIMD 2210633).